We begin with the raw amino-acid sequence, 518 residues long: Glutamate--cysteine ligase (518 aa).

It belongs to the glutamate--cysteine ligase type 1 family. Type 1 subfamily.

The catalysed reaction is L-cysteine + L-glutamate + ATP = gamma-L-glutamyl-L-cysteine + ADP + phosphate + H(+). It functions in the pathway sulfur metabolism; glutathione biosynthesis; glutathione from L-cysteine and L-glutamate: step 1/2. The polypeptide is Glutamate--cysteine ligase (Escherichia coli O127:H6 (strain E2348/69 / EPEC)).